The sequence spans 323 residues: Mediator of RNA polymerase II transcription subunit 6 (323 aa).

Disordered regions lie at residues 172–213 (FTPS…DAAG) and 271–323 (TDRT…KVGS). Polar residues predominate over residues 189–203 (DASQPGTQSQQSKEN). A compositionally biased stretch (low complexity) spans 276 to 285 (AAKPPATAAK). The segment covering 314–323 (MRKKKTKVGS) has biased composition (basic residues).

Belongs to the Mediator complex subunit 6 family. As to quaternary structure, component of the Mediator complex.

The protein resides in the nucleus. Component of the Mediator complex, a coactivator involved in the regulated transcription of nearly all RNA polymerase II-dependent genes. Mediator functions as a bridge to convey information from gene-specific regulatory proteins to the basal RNA polymerase II transcription machinery. Mediator is recruited to promoters by direct interactions with regulatory proteins and serves as a scaffold for the assembly of a functional preinitiation complex with RNA polymerase II and the general transcription factors. The polypeptide is Mediator of RNA polymerase II transcription subunit 6 (med6) (Aspergillus niger (strain ATCC MYA-4892 / CBS 513.88 / FGSC A1513)).